Consider the following 333-residue polypeptide: DNA repair and recombination protein RadA (333 aa).

Residue glycine 127 to threonine 134 coordinates ATP.

Belongs to the eukaryotic RecA-like protein family.

Its function is as follows. Involved in DNA repair and in homologous recombination. Binds and assemble on single-stranded DNA to form a nucleoprotein filament. Hydrolyzes ATP in a ssDNA-dependent manner and promotes DNA strand exchange between homologous DNA molecules. The sequence is that of DNA repair and recombination protein RadA from Pyrobaculum arsenaticum (strain DSM 13514 / JCM 11321 / PZ6).